A 503-amino-acid polypeptide reads, in one-letter code: Maturase K (503 aa).

Belongs to the intron maturase 2 family. MatK subfamily.

The protein resides in the plastid. It is found in the chloroplast. In terms of biological role, usually encoded in the trnK tRNA gene intron. Probably assists in splicing its own and other chloroplast group II introns. The sequence is that of Maturase K from Rosa canina (Dog rose).